Reading from the N-terminus, the 371-residue chain is Hsc70-interacting protein (371 aa).

The interval 38-80 (MGGKVPPATHKAKSEENTKEEKRDKTTEENIKTEELSSEESDL) is disordered. The span at 49–72 (AKSEENTKEEKRDKTTEENIKTEE) shows a compositional bias: basic and acidic residues. 3 TPR repeats span residues 113–146 (ANEK…NPRL), 147–180 (AILY…NPDS), and 181–214 (AQPY…DYDE). Positions 255-271 (KAREEHERAQREEEARR) are enriched in basic and acidic residues. A disordered region spans residues 255-296 (KAREEHERAQREEEARRQSGSQYGSFPGGFPGGMPGNFPGGM). Over residues 280-296 (FPGGFPGGMPGNFPGGM) the composition is skewed to gly residues. The STI1 domain maps to 321 to 360 (DPEVLAAMQDPEVMVAFQDVAQNPSNMSKYQSNPKVMNLI). S348 carries the post-translational modification Phosphoserine; by GRK5. N6-acetyllysine is present on residues K355 and K362.

This sequence belongs to the FAM10 family. In terms of assembly, homotetramer. Interacts with HSC70 as well as DNAJ homologs and HSP90. Interacts (via the C-terminus 302- 318 AA) with GRK5.

Its subcellular location is the cytoplasm. Its function is as follows. One HIP oligomer binds the ATPase domains of at least two HSC70 molecules dependent on activation of the HSC70 ATPase by HSP40. Stabilizes the ADP state of HSC70 that has a high affinity for substrate protein. Through its own chaperone activity, it may contribute to the interaction of HSC70 with various target proteins. In Mus musculus (Mouse), this protein is Hsc70-interacting protein (St13).